Consider the following 234-residue polypeptide: Sugar fermentation stimulation protein A (234 aa).

A DNA-binding region (H-T-H motif) is located at residues 201 to 220 (LLSEAQQRGVEILAYKAEIS).

Belongs to the SfsA family.

Binds to DNA non-specifically. Could be a regulatory factor involved in maltose metabolism. This chain is Sugar fermentation stimulation protein A, found in Shigella flexneri serotype 5b (strain 8401).